We begin with the raw amino-acid sequence, 245 residues long: Orotidine 5'-phosphate decarboxylase (245 aa).

Residues D22, K44, 71-80, T131, R192, Q201, G221, and R222 each bind substrate; that span reads DLKFHDIPNT. K73 serves as the catalytic Proton donor.

The protein belongs to the OMP decarboxylase family. Type 1 subfamily. Homodimer.

It carries out the reaction orotidine 5'-phosphate + H(+) = UMP + CO2. Its pathway is pyrimidine metabolism; UMP biosynthesis via de novo pathway; UMP from orotate: step 2/2. Catalyzes the decarboxylation of orotidine 5'-monophosphate (OMP) to uridine 5'-monophosphate (UMP). This chain is Orotidine 5'-phosphate decarboxylase, found in Salmonella typhi.